A 228-amino-acid chain; its full sequence is Small ribosomal subunit protein uS3 (228 aa).

One can recognise a KH type-2 domain in the interval 39-107 (VREYLQDKLK…PVHINIEEIR (69 aa)).

The protein belongs to the universal ribosomal protein uS3 family. As to quaternary structure, part of the 30S ribosomal subunit. Forms a tight complex with proteins S10 and S14.

In terms of biological role, binds the lower part of the 30S subunit head. Binds mRNA in the 70S ribosome, positioning it for translation. The polypeptide is Small ribosomal subunit protein uS3 (Pseudomonas syringae pv. syringae (strain B728a)).